The primary structure comprises 147 residues: Vasopressin-neurophysin 2-copeptin (147 aa).

A disulfide bridge links cysteine 1 with cysteine 6. The residue at position 9 (glycine 9) is a Glycine amide. 7 cysteine pairs are disulfide-bonded: cysteine 22/cysteine 66, cysteine 25/cysteine 39, cysteine 33/cysteine 56, cysteine 40/cysteine 46, cysteine 73/cysteine 85, cysteine 79/cysteine 97, and cysteine 86/cysteine 91. Asparagine 114 carries N-linked (GlcNAc...) asparagine glycosylation.

This sequence belongs to the vasopressin/oxytocin family. In terms of assembly, interacts with vasopressin receptors V1bR/AVPR1B (Ki=85 pM), V1aR/AVPR1A (Ki=0.6 nM) and V2R/AVPR2 (Ki=4.9 nM). Interacts with oxytocin receptor (OXTR) (Ki=110 nM).

It localises to the secreted. Functionally, neurophysin 2 specifically binds vasopressin. Its function is as follows. Vasopressin has a direct antidiuretic action on the kidney, it also causes vasoconstriction of the peripheral vessels. Acts by binding to vasopressin receptors (V1bR/AVPR1B, V1aR/AVPR1A, and V2R/AVPR2). The chain is Vasopressin-neurophysin 2-copeptin (AVP) from Ovis aries (Sheep).